The primary structure comprises 673 residues: MFQDNPLLAQLKQQIRENIPKKEGVIRASDRGFGFLEVDEKTSYFVPPPYMKKVMHGDRVSALIRTEKEKEVAEPDALLEQSVTRFVARVKMFRDRLNVVADHPLIKDAIKARVKKGLDEKEFKEGDWVVATLKRHALVDGNFSAEITQTIASQEDHNVPWWVVLARHNLAQVEPADLPEWKVIEEEELPRTDLTATPFFTIDGAKTKDMDDALAIRKLDNGWELLVAIADPTAYVAEGSELDKEAAQRAFTVYMPGRNVPMIPRTLSDELCSLKEGEERNTLCARLLIAEDGLLLEETEFFAARISSHARLTYDDVSDWAEHGKQLDIDAGVLAQLPLMKAMTEARIAWRTEHALVFPDRPDYDFELGENGEVLAIHVEPRRIANRMVEESMIAANICAGRVLGKQVGYGIFNVHTGFDEESLDGAIDLLKSAEAPFEKEEIASLSGFCALRRWIDNLDTRWLDGKIRRFQSYALMSAEPGAHYGLGLDAYATWTSPIRKYGDMVNHRLLKAVIAGKTPGERPSLELTEHLTACRRLHRMVERDIGDWLYVRYLKADAGTDKVFNAEIIDVMRAGLKLRLRENGAVVFMPARHILDNKDRLECNWDNGRVYLDKTEVVYELGQIIEVKLTEAVEETRSLIAKPAVELVPGPAPVAPTSEADATPADEAPKAE.

The region spanning 191–516 (RTDLTATPFF…NHRLLKAVIA (326 aa)) is the RNB domain. The region spanning 562–645 (DKVFNAEIID…ETRSLIAKPA (84 aa)) is the S1 motif domain. Residues 650–673 (PGPAPVAPTSEADATPADEAPKAE) form a disordered region.

Belongs to the RNR ribonuclease family. RNase II subfamily.

The protein localises to the cytoplasm. The enzyme catalyses Exonucleolytic cleavage in the 3'- to 5'-direction to yield nucleoside 5'-phosphates.. Functionally, involved in mRNA degradation. Hydrolyzes single-stranded polyribonucleotides processively in the 3' to 5' direction. The polypeptide is Exoribonuclease 2 (Aeromonas hydrophila subsp. hydrophila (strain ATCC 7966 / DSM 30187 / BCRC 13018 / CCUG 14551 / JCM 1027 / KCTC 2358 / NCIMB 9240 / NCTC 8049)).